Consider the following 293-residue polypeptide: 4-hydroxy-tetrahydrodipicolinate synthase (293 aa).

Threonine 46 serves as a coordination point for pyruvate. Tyrosine 133 serves as the catalytic Proton donor/acceptor. Lysine 161 (schiff-base intermediate with substrate) is an active-site residue. Valine 202 is a pyruvate binding site.

Belongs to the DapA family. Homotetramer; dimer of dimers.

Its subcellular location is the cytoplasm. It carries out the reaction L-aspartate 4-semialdehyde + pyruvate = (2S,4S)-4-hydroxy-2,3,4,5-tetrahydrodipicolinate + H2O + H(+). It participates in amino-acid biosynthesis; L-lysine biosynthesis via DAP pathway; (S)-tetrahydrodipicolinate from L-aspartate: step 3/4. Its function is as follows. Catalyzes the condensation of (S)-aspartate-beta-semialdehyde [(S)-ASA] and pyruvate to 4-hydroxy-tetrahydrodipicolinate (HTPA). The chain is 4-hydroxy-tetrahydrodipicolinate synthase from Wolbachia pipientis wMel.